The chain runs to 369 residues: Dual-specificity RNA methyltransferase RlmN (369 aa).

E94 serves as the catalytic Proton acceptor. The region spanning 113–346 (ESEKWTMCLS…CTIRESRGID (234 aa)) is the Radical SAM core domain. An intrachain disulfide couples C120 to C351. [4Fe-4S] cluster is bound by residues C127, C131, and C134. Residues 177 to 178 (GE), S209, 232 to 234 (SLH), and N308 each bind S-adenosyl-L-methionine. C351 serves as the catalytic S-methylcysteine intermediate.

This sequence belongs to the radical SAM superfamily. RlmN family. Requires [4Fe-4S] cluster as cofactor.

It is found in the cytoplasm. It catalyses the reaction adenosine(2503) in 23S rRNA + 2 reduced [2Fe-2S]-[ferredoxin] + 2 S-adenosyl-L-methionine = 2-methyladenosine(2503) in 23S rRNA + 5'-deoxyadenosine + L-methionine + 2 oxidized [2Fe-2S]-[ferredoxin] + S-adenosyl-L-homocysteine. The catalysed reaction is adenosine(37) in tRNA + 2 reduced [2Fe-2S]-[ferredoxin] + 2 S-adenosyl-L-methionine = 2-methyladenosine(37) in tRNA + 5'-deoxyadenosine + L-methionine + 2 oxidized [2Fe-2S]-[ferredoxin] + S-adenosyl-L-homocysteine. Its function is as follows. Specifically methylates position 2 of adenine 2503 in 23S rRNA and position 2 of adenine 37 in tRNAs. m2A2503 modification seems to play a crucial role in the proofreading step occurring at the peptidyl transferase center and thus would serve to optimize ribosomal fidelity. The polypeptide is Dual-specificity RNA methyltransferase RlmN (Helicobacter hepaticus (strain ATCC 51449 / 3B1)).